A 218-amino-acid polypeptide reads, in one-letter code: MTAVIGVRELGLLDYLPAWQAMQRFTGQRGAQTPDELWLLEHPPVFTQGQAGKAEHLLFPGDIPVVQVDRGGQVTYHGPGQLVGYLLLDVRRSGMGVRELVSRIERSLIELLAGYDVEAHARPDAPGVYVGEMKIASLGLRIRNGRSFHGLALNVDMDLAPFQRINPCGYAGMLMTQLKDQARGPVEFAEVRSRLRAQLAAQLGYAEAKTLTGGIESI.

The 177-residue stretch at 31–207 (AQTPDELWLL…QLAAQLGYAE (177 aa)) folds into the BPL/LPL catalytic domain. Residues 70–77 (RGGQVTYH), 137–139 (SLG), and 150–152 (GLA) each bind substrate. Cys-168 functions as the Acyl-thioester intermediate in the catalytic mechanism.

This sequence belongs to the LipB family.

The protein resides in the cytoplasm. It carries out the reaction octanoyl-[ACP] + L-lysyl-[protein] = N(6)-octanoyl-L-lysyl-[protein] + holo-[ACP] + H(+). It participates in protein modification; protein lipoylation via endogenous pathway; protein N(6)-(lipoyl)lysine from octanoyl-[acyl-carrier-protein]: step 1/2. Its function is as follows. Catalyzes the transfer of endogenously produced octanoic acid from octanoyl-acyl-carrier-protein onto the lipoyl domains of lipoate-dependent enzymes. Lipoyl-ACP can also act as a substrate although octanoyl-ACP is likely to be the physiological substrate. This chain is Octanoyltransferase, found in Azotobacter vinelandii (strain DJ / ATCC BAA-1303).